Reading from the N-terminus, the 184-residue chain is Protein Iojap-related, mitochondrial (184 aa).

The N-terminal 39 residues, 1 to 39, are a transit peptide targeting the mitochondrion; that stretch reads MLTTLRSRCSSLLLNQSWKLAPNRIFASSPSFSSSAGIS.

It belongs to the Iojap/RsfS family.

It localises to the mitochondrion. Its function is as follows. May be a ribosome silencing factor involved in organelle biogenesis and required for germination. The chain is Protein Iojap-related, mitochondrial from Arabidopsis thaliana (Mouse-ear cress).